The primary structure comprises 613 residues: Zinc metalloproteinase-disintegrin-like VMP-III (613 aa).

Positions 1-20 (MIQVLLVTLCLAAFPYQGSS) are cleaved as a signal peptide. Residues 21–190 (IILDSGNVND…KKASQLVVTP (170 aa)) constitute a propeptide that is removed on maturation. One can recognise a Peptidase M12B domain in the interval 200-396 (KYIELVIVAD…NRPPCILNKP (197 aa)). Residue Glu203 participates in Ca(2+) binding. N-linked (GlcNAc...) asparagine glycosylation is present at Asn219. Ca(2+) is bound at residue Asp287. Disulfide bonds link Cys311/Cys391, Cys351/Cys375, and Cys353/Cys358. His336 provides a ligand contact to Zn(2+). Residue Glu337 is part of the active site. Positions 340 and 346 each coordinate Zn(2+). Cys391, Asn394, Val406, Asn409, Phe411, Glu413, Glu416, and Asp419 together coordinate Ca(2+). One can recognise a Disintegrin domain in the interval 404–490 (PPVCGNYFVE…ECPTDDFQRN (87 aa)). 14 cysteine pairs are disulfide-bonded: Cys407/Cys436, Cys418/Cys431, Cys420/Cys426, Cys430/Cys453, Cys444/Cys450, Cys449/Cys475, Cys462/Cys482, Cys469/Cys501, Cys494/Cys506, Cys513/Cys563, Cys528/Cys574, Cys541/Cys551, Cys558/Cys600, and Cys594/Cys606. The D/ECD-tripeptide motif lies at 468–470 (ECD). Asn503 carries N-linked (GlcNAc...) asparagine glycosylation.

Belongs to the venom metalloproteinase (M12B) family. P-III subfamily. P-IIIa sub-subfamily. In terms of assembly, monomer. Requires Zn(2+) as cofactor. As to expression, expressed by the venom gland.

It localises to the secreted. Its function is as follows. Snake venom metalloproteinase that impairs hemostasis in the envenomed animal. The polypeptide is Zinc metalloproteinase-disintegrin-like VMP-III (Agkistrodon piscivorus leucostoma (Western cottonmouth)).